The chain runs to 168 residues: Heat shock protein beta-9 (168 aa).

The segment covering 1 to 12 (MQRVGSSFSTGQ) has biased composition (polar residues). Disordered stretches follow at residues 1–25 (MQRV…SRCP), 83–104 (TGQR…EQSV), and 129–168 (LWLR…VKNP). One can recognise a sHSP domain in the interval 38–151 (LPVRLLRDEV…EAQTGQSQKP (114 aa)). Basic and acidic residues predominate over residues 86-104 (RQHESNDPSRGRYRMEQSV). Over residues 158 to 168 (SSLQNESVKNP) the composition is skewed to polar residues.

This sequence belongs to the small heat shock protein (HSP20) family. Testis specific.

The protein resides in the cytoplasm. It localises to the nucleus. This is Heat shock protein beta-9 (Hspb9) from Mus musculus (Mouse).